A 199-amino-acid chain; its full sequence is Pyridoxine/pyridoxamine 5'-phosphate oxidase (199 aa).

Residues 45 to 50, 60 to 61, Arg-66, Lys-67, and Gln-89 contribute to the FMN site; these read RVVLLK and FT. Lys-50 contributes to the substrate binding site. Substrate-binding residues include Tyr-107, Arg-111, and Ser-115. FMN contacts are provided by residues 124-125 and Trp-169; that span reads QS. Position 175–177 (175–177) interacts with substrate; it reads RIH. Arg-179 is a binding site for FMN.

The protein belongs to the pyridoxamine 5'-phosphate oxidase family. In terms of assembly, homodimer. The cofactor is FMN.

It catalyses the reaction pyridoxamine 5'-phosphate + O2 + H2O = pyridoxal 5'-phosphate + H2O2 + NH4(+). The enzyme catalyses pyridoxine 5'-phosphate + O2 = pyridoxal 5'-phosphate + H2O2. It functions in the pathway cofactor metabolism; pyridoxal 5'-phosphate salvage; pyridoxal 5'-phosphate from pyridoxamine 5'-phosphate: step 1/1. It participates in cofactor metabolism; pyridoxal 5'-phosphate salvage; pyridoxal 5'-phosphate from pyridoxine 5'-phosphate: step 1/1. Catalyzes the oxidation of either pyridoxine 5'-phosphate (PNP) or pyridoxamine 5'-phosphate (PMP) into pyridoxal 5'-phosphate (PLP). The chain is Pyridoxine/pyridoxamine 5'-phosphate oxidase from Ehrlichia chaffeensis (strain ATCC CRL-10679 / Arkansas).